The sequence spans 161 residues: MRWSLCCHINVRIAYTICGIIIGLFWACVYIFAWKNWVALAACLTATAFAFETFYFYLSVKRDTILNWKSQTFQVLFWINLIVGFLSIGGMITAIVLAATKHQGVSNKDQHGLNWWSTATWFLVMLKWTWQNAFIARYYGKLLTKSIIHPEEPDDPSTWKF.

A run of 4 helical transmembrane segments spans residues 13 to 33 (IAYT…YIFA), 38 to 58 (VALA…YFYL), 75 to 95 (VLFW…ITAI), and 115 to 135 (WWST…NAFI).

It belongs to the HRG family.

Its subcellular location is the membrane. Its function is as follows. Heme transporter. This chain is Heme transporter hrg-6 (hrg-6), found in Caenorhabditis elegans.